The following is a 483-amino-acid chain: Rhamnulokinase (483 aa).

Residue 11–15 (ASSGR) coordinates ATP. Substrate contacts are provided by residues Gly-79 and 234–236 (HDT). Asp-235 (proton acceptor) is an active-site residue. An ATP-binding site is contributed by Thr-257. Asn-294 is a binding site for substrate. Residue Gln-302 coordinates ATP. Cys-352 and Cys-369 are joined by a disulfide. Gly-401 provides a ligand contact to ATP.

This sequence belongs to the rhamnulokinase family. Mg(2+) serves as cofactor.

The catalysed reaction is L-rhamnulose + ATP = L-rhamnulose 1-phosphate + ADP + H(+). Its pathway is carbohydrate degradation; L-rhamnose degradation; glycerone phosphate from L-rhamnose: step 2/3. Involved in the catabolism of L-rhamnose (6-deoxy-L-mannose). Catalyzes the transfer of the gamma-phosphate group from ATP to the 1-hydroxyl group of L-rhamnulose to yield L-rhamnulose 1-phosphate. The sequence is that of Rhamnulokinase from Listeria monocytogenes serovar 1/2a (strain ATCC BAA-679 / EGD-e).